A 113-amino-acid polypeptide reads, in one-letter code: Protein USP1 (113 aa).

Residues 1–18 form the signal peptide; sequence MKITMLFAALSAASGAFA. Repeat copies occupy residues 32–37, 40–45, 46–49, 50–53, 59–65, and 69–75. The interval 32-45 is 2 X 6 AA repeats; the sequence is IGAGVGIGIGAGVG. Residues 46-53 are 2 X 4 AA approximate tandem repeats; that stretch reads PYGYPYGA. Positions 59–75 are 2 X 7 AA approximate repeats; that stretch reads LQLLPLRWLSLQWIPLR.

The protein localises to the secreted. The protein is Protein USP1 (USP1) of Puccinia graminis (Black stem rust fungus).